Consider the following 259-residue polypeptide: (3R)-3-hydroxyacyl-CoA dehydrogenase (259 aa).

Residues 13–21 (LVTGAGSGI) and 40–41 (DL) contribute to the NAD(+) site. S58 is subject to Phosphoserine. 72 to 74 (ADV) is a binding site for NAD(+). S154 provides a ligand contact to substrate. K158 carries the N6-succinyllysine modification. Residue Y167 is the Proton acceptor of the active site. NAD(+) is bound by residues 167–171 (YAASK) and 200–202 (ITT). The residue at position 171 (K171) is an N6-succinyllysine.

It belongs to the short-chain dehydrogenases/reductases (SDR) family. As to quaternary structure, heterotetramer with CBR4; contains two molecules of HSD17B8 and CBR4.

Its subcellular location is the mitochondrion matrix. The catalysed reaction is a (3R)-3-hydroxyacyl-CoA + NAD(+) = a 3-oxoacyl-CoA + NADH + H(+). The enzyme catalyses 17beta-estradiol + NAD(+) = estrone + NADH + H(+). It carries out the reaction testosterone + NAD(+) = androst-4-ene-3,17-dione + NADH + H(+). It catalyses the reaction 17beta-hydroxy-5alpha-androstan-3-one + NAD(+) = 5alpha-androstan-3,17-dione + NADH + H(+). It functions in the pathway steroid biosynthesis; estrogen biosynthesis. The protein operates within lipid metabolism; fatty acid biosynthesis. Its pathway is lipid metabolism; mitochondrial fatty acid beta-oxidation. Functionally, required for the solubility and assembly of the heterotetramer 3-ketoacyl-[acyl carrier protein] (ACP) reductase functional complex (KAR or KAR1) that forms part of the mitochondrial fatty acid synthase (mtFAS). Alpha-subunit of the KAR complex that acts as scaffold protein required for the stability of carbonyl reductase type-4 (CBR4, beta-subunit of the KAR complex) and for its 3-ketoacyl-ACP reductase activity, thereby participating in mitochondrial fatty acid biosynthesis. Catalyzes the NAD-dependent conversion of (3R)-3-hydroxyacyl-CoA into 3-ketoacyl-CoA (3-oxoacyl-CoA) with no chain length preference; this enzymatic activity is not needed for the KAR function. Prefers (3R)-3-hydroxyacyl-CoA over (3S)-3-hydroxyacyl-CoA and displays enzymatic activity only in the presence of NAD(+). Cooperates with enoyl-CoA hydratase 1 in mitochondria, together they constitute an alternative route to the auxiliary enzyme pathways for the breakdown of Z-PUFA (cis polyunsaturated fatty acid) enoyl-esters. NAD-dependent 17-beta-hydroxysteroid dehydrogenase with highest activity towards estradiol (17beta-estradiol or E2). Has very low activity towards testosterone and dihydrotestosterone (17beta-hydroxy-5alpha-androstan-3-one). Primarily an oxidative enzyme, it can switch to a reductive mode determined in the appropriate physiologic milieu and catalyze the reduction of estrone (E1) to form biologically active 17beta-estradiol. This chain is (3R)-3-hydroxyacyl-CoA dehydrogenase (HSD17B8), found in Canis lupus familiaris (Dog).